The chain runs to 397 residues: NADH-quinone oxidoreductase subunit H (397 aa).

Helical transmembrane passes span 7 to 27 (ALLI…TAFA), 78 to 98 (LVYT…FGGI), 120 to 140 (ILAL…GGWA), 164 to 184 (MGLS…LDIV), 195 to 215 (WLIL…FAEV), 247 to 267 (MAEY…FFGG), 283 to 303 (SWPL…FIWV), 322 to 342 (LTLP…AFVP), and 353 to 373 (WLLG…SDAV).

This sequence belongs to the complex I subunit 1 family. In terms of assembly, NDH-1 is composed of 15 different subunits. Subunits NuoA, H, J, K, L, M, N constitute the membrane sector of the complex.

Its subcellular location is the cell membrane. The catalysed reaction is a quinone + NADH + 5 H(+)(in) = a quinol + NAD(+) + 4 H(+)(out). Functionally, NDH-1 shuttles electrons from NADH, via FMN and iron-sulfur (Fe-S) centers, to quinones in the respiratory chain. The immediate electron acceptor for the enzyme in this species is believed to be ubiquinone. Couples the redox reaction to proton translocation (for every two electrons transferred, four hydrogen ions are translocated across the cytoplasmic membrane), and thus conserves the redox energy in a proton gradient. This subunit may bind ubiquinone. The polypeptide is NADH-quinone oxidoreductase subunit H (Deinococcus radiodurans (strain ATCC 13939 / DSM 20539 / JCM 16871 / CCUG 27074 / LMG 4051 / NBRC 15346 / NCIMB 9279 / VKM B-1422 / R1)).